A 209-amino-acid chain; its full sequence is Ribulose-phosphate 3-epimerase (209 aa).

Ser8 provides a ligand contact to substrate. 4 residues coordinate a divalent metal cation: His33, Asp35, His64, and Asp170. Residue Asp35 is the Proton acceptor of the active site. Residues His64, 170 to 172 (DGG), and 191 to 192 (GS) each bind substrate. The active-site Proton donor is Asp170.

This sequence belongs to the ribulose-phosphate 3-epimerase family. A divalent metal cation is required as a cofactor.

The enzyme catalyses D-ribulose 5-phosphate = D-xylulose 5-phosphate. The protein operates within carbohydrate degradation. Catalyzes the reversible epimerization of D-ribulose 5-phosphate to D-xylulose 5-phosphate. The protein is Ribulose-phosphate 3-epimerase of Mycoplasma genitalium (strain ATCC 33530 / DSM 19775 / NCTC 10195 / G37) (Mycoplasmoides genitalium).